Reading from the N-terminus, the 276-residue chain is MRVLETIAVLREYRKSLKESVGFVPTMGALHRGHQSLIERSLKENSHTIVSVFVNPTQFGANEDFSAYPRPLEKDLALCEKLGVSAVFVPKVSEMYPYEIEQRLKLYAPTFLSHSLEGAVRHGHFDGVVQVVLRLFHLVNPTRAYFGKKDAQQLLIIEHLVKDLLLDIEIAPCEIARDSDHLALSSRNVYLNATERKQALAIPKALENIKQAIDKGEKACEKLKKLGLEILETLEVDYLEFCNHKLEPLKTIEPANTLVLVAARVGKTRLLDNLWV.

27–34 (MGALHRGH) contacts ATP. The active-site Proton donor is His34. Residue Gln58 coordinates (R)-pantoate. Gln58 is a binding site for beta-alanine. Residue 147–150 (GKKD) coordinates ATP. Gln153 is a binding site for (R)-pantoate. Residues Ala176 and 184–187 (LSSR) each bind ATP.

This sequence belongs to the pantothenate synthetase family. Homodimer.

The protein localises to the cytoplasm. It carries out the reaction (R)-pantoate + beta-alanine + ATP = (R)-pantothenate + AMP + diphosphate + H(+). The protein operates within cofactor biosynthesis; (R)-pantothenate biosynthesis; (R)-pantothenate from (R)-pantoate and beta-alanine: step 1/1. Its function is as follows. Catalyzes the condensation of pantoate with beta-alanine in an ATP-dependent reaction via a pantoyl-adenylate intermediate. The protein is Pantothenate synthetase of Helicobacter pylori (strain P12).